The sequence spans 450 residues: MYTKDTIVAVATPQGNGGIGIVRISGSDALSIAEKLTKKRLKPRYATFCNIYNINEIIDHGIVIFFNSPNSYTGEDVVEIQAHGNPFILNLIIKATLEYGARMANAGEFTERAFLNNKLDLTQAEAVADIINASSETAAKSAAKSLQGDFSKEINNLLEKLIYLRMYVEASIDFPEEEINFLEDQKIHNSLQDIYKTILDVKNSCKQGAILVEGITLILVGKPNAGKSSLLNALAGKESAIVTSIAGTTRDIVKEHIQINGVPMHIIDTAGLRSSDDIIESEGIKRAIKKIQEADQILFVTDDYTNSQVKFSDIKDIIPEFYHQIPKDIDITYVHNKIDLLKEVPLNHDNHIYISAESNIGIDKLKDHILAKVGYTTQNESIYTARERHVTAIDNAFDHIKLAKEQLELGNGELLAEELLIVQEHLNSITGEFSSDDLLGEIFSSFCIGK.

Arg-23, Glu-79, and Lys-118 together coordinate (6S)-5-formyl-5,6,7,8-tetrahydrofolate. Positions Gly-214–Gly-374 constitute a TrmE-type G domain. Asn-224 lines the K(+) pocket. Residues Asn-224–Ser-229, Thr-243–Thr-249, and Asp-268–Gly-271 each bind GTP. Ser-228 serves as a coordination point for Mg(2+). K(+) is bound by residues Thr-243, Ile-245, and Thr-248. Thr-249 provides a ligand contact to Mg(2+). A (6S)-5-formyl-5,6,7,8-tetrahydrofolate-binding site is contributed by Lys-450.

Belongs to the TRAFAC class TrmE-Era-EngA-EngB-Septin-like GTPase superfamily. TrmE GTPase family. As to quaternary structure, homodimer. Heterotetramer of two MnmE and two MnmG subunits. K(+) is required as a cofactor.

The protein resides in the cytoplasm. In terms of biological role, exhibits a very high intrinsic GTPase hydrolysis rate. Involved in the addition of a carboxymethylaminomethyl (cmnm) group at the wobble position (U34) of certain tRNAs, forming tRNA-cmnm(5)s(2)U34. The polypeptide is tRNA modification GTPase MnmE (Francisella philomiragia subsp. philomiragia (strain ATCC 25017 / CCUG 19701 / FSC 153 / O#319-036)).